The primary structure comprises 71 residues: Large ribosomal subunit protein bL31 (71 aa).

Belongs to the bacterial ribosomal protein bL31 family. Type A subfamily. Part of the 50S ribosomal subunit.

In terms of biological role, binds the 23S rRNA. The protein is Large ribosomal subunit protein bL31 of Metamycoplasma arthritidis (strain 158L3-1) (Mycoplasma arthritidis).